A 405-amino-acid polypeptide reads, in one-letter code: Glutathione S-transferase LANCL1 (405 aa).

Cysteine 282 serves as a coordination point for Zn(2+). Lysine 323 is a binding site for glutathione. Zn(2+) contacts are provided by cysteine 328 and histidine 329. Position 370-373 (370-373) interacts with glutathione; it reads RTPD.

Belongs to the LanC-like protein family.

The protein resides in the cytoplasm. It localises to the cell membrane. The catalysed reaction is RX + glutathione = an S-substituted glutathione + a halide anion + H(+). The enzyme catalyses 1-chloro-2,4-dinitrobenzene + glutathione = 2,4-dinitrophenyl-S-glutathione + chloride + H(+). Functionally, functions as a glutathione transferase. Catalyzes conjugation of the glutathione (GSH) to artificial substrates 1-chloro-2,4-dinitrobenzene (CDNB) and p-nitrophenyl acetate. Binds glutathione. In Danio rerio (Zebrafish), this protein is Glutathione S-transferase LANCL1.